We begin with the raw amino-acid sequence, 122 residues long: MMARIFILALLGQLCFLPYLDAITSSPKVQVYSRHPVDSNKENFVNCFVSGFHPPQITIELSKDGEKIPKVEESDLSFSNDWTFNRLVSAPFDPNSRSEYTCKVTHLTLQEPKVVKWDPENN.

An N-terminal signal peptide occupies residues 1-22 (MMARIFILALLGQLCFLPYLDA). An Ig-like C1-type domain is found at 27 to 115 (PKVQVYSRHP…HLTLQEPKVV (89 aa)). Cysteines 47 and 102 form a disulfide.

It belongs to the beta-2-microglobulin family. In terms of assembly, heterodimer of an alpha chain and a beta chain. Beta-2-microglobulin is the beta-chain of major histocompatibility complex class I molecules.

It is found in the secreted. In terms of biological role, component of the class I major histocompatibility complex (MHC). Involved in the presentation of peptide antigens to the immune system. The chain is Beta-2-microglobulin (B2M) from Trichosurus vulpecula (Brush-tailed possum).